Reading from the N-terminus, the 424-residue chain is 3-phosphoshikimate 1-carboxyvinyltransferase (424 aa).

3-phosphoshikimate-binding residues include K21, S22, and R26. Position 21 (K21) interacts with phosphoenolpyruvate. Phosphoenolpyruvate contacts are provided by G91 and R119. 3-phosphoshikimate contacts are provided by S164, Q166, D310, and K337. Phosphoenolpyruvate is bound at residue Q166. The Proton acceptor role is filled by D310. Residues R341 and R382 each contribute to the phosphoenolpyruvate site.

The protein belongs to the EPSP synthase family. As to quaternary structure, monomer.

The protein resides in the cytoplasm. The catalysed reaction is 3-phosphoshikimate + phosphoenolpyruvate = 5-O-(1-carboxyvinyl)-3-phosphoshikimate + phosphate. The protein operates within metabolic intermediate biosynthesis; chorismate biosynthesis; chorismate from D-erythrose 4-phosphate and phosphoenolpyruvate: step 6/7. In terms of biological role, catalyzes the transfer of the enolpyruvyl moiety of phosphoenolpyruvate (PEP) to the 5-hydroxyl of shikimate-3-phosphate (S3P) to produce enolpyruvyl shikimate-3-phosphate and inorganic phosphate. This Campylobacter hominis (strain ATCC BAA-381 / DSM 21671 / CCUG 45161 / LMG 19568 / NCTC 13146 / CH001A) protein is 3-phosphoshikimate 1-carboxyvinyltransferase.